The chain runs to 98 residues: MNAMLVLFIASALFISEHNTEEVKTTPIPNHQCVNATCERKLDALGNAVITKCPQGCLCVVRGASNIVPANGTCFQLATTKPPMAPGDNKDNKEEESN.

An N-terminal signal peptide occupies residues 1–20; the sequence is MNAMLVLFIASALFISEHNT. Intrachain disulfides connect cysteine 33–cysteine 57, cysteine 38–cysteine 59, and cysteine 53–cysteine 74. The disordered stretch occupies residues 79-98; the sequence is TTKPPMAPGDNKDNKEEESN. Positions 88 to 98 are enriched in basic and acidic residues; it reads DNKDNKEEESN.

Belongs to the RaCI family. As to expression, expressed in salivary glands.

The protein resides in the secreted. Complement inhibitor. Prevents complement-mediated C5 activation by binding to C5. Binds C5 at a different binding site than the other tick complement inhibitors OmCI and CirpT1, and the drug eculizumab. Inhibits the complement in human and guinea pig but not in other species tested (rabbit, rat, mouse, and pig). The chain is Complement inhibitor RaCI1 from Rhipicephalus appendiculatus (Brown ear tick).